The sequence spans 246 residues: Pyridoxine 5'-phosphate synthase (246 aa).

Asparagine 12 lines the 3-amino-2-oxopropyl phosphate pocket. Position 14–15 (14–15) interacts with 1-deoxy-D-xylulose 5-phosphate; it reads DH. Arginine 23 is a binding site for 3-amino-2-oxopropyl phosphate. Histidine 48 functions as the Proton acceptor in the catalytic mechanism. Residues arginine 50 and histidine 55 each coordinate 1-deoxy-D-xylulose 5-phosphate. The Proton acceptor role is filled by glutamate 75. Threonine 105 contacts 1-deoxy-D-xylulose 5-phosphate. Histidine 196 (proton donor) is an active-site residue. 3-amino-2-oxopropyl phosphate contacts are provided by residues glycine 197 and 218-219; that span reads GH.

This sequence belongs to the PNP synthase family. In terms of assembly, homooctamer; tetramer of dimers.

Its subcellular location is the cytoplasm. It carries out the reaction 3-amino-2-oxopropyl phosphate + 1-deoxy-D-xylulose 5-phosphate = pyridoxine 5'-phosphate + phosphate + 2 H2O + H(+). It functions in the pathway cofactor biosynthesis; pyridoxine 5'-phosphate biosynthesis; pyridoxine 5'-phosphate from D-erythrose 4-phosphate: step 5/5. Functionally, catalyzes the complicated ring closure reaction between the two acyclic compounds 1-deoxy-D-xylulose-5-phosphate (DXP) and 3-amino-2-oxopropyl phosphate (1-amino-acetone-3-phosphate or AAP) to form pyridoxine 5'-phosphate (PNP) and inorganic phosphate. The protein is Pyridoxine 5'-phosphate synthase of Pseudomonas putida (strain ATCC 47054 / DSM 6125 / CFBP 8728 / NCIMB 11950 / KT2440).